The sequence spans 225 residues: 7-cyano-7-deazaguanine synthase (225 aa).

10–20 (VSGGLDSTTVI) is a binding site for ATP. Residues Cys189, Cys199, Cys202, and Cys205 each contribute to the Zn(2+) site.

The protein belongs to the QueC family. Zn(2+) is required as a cofactor.

The catalysed reaction is 7-carboxy-7-deazaguanine + NH4(+) + ATP = 7-cyano-7-deazaguanine + ADP + phosphate + H2O + H(+). It functions in the pathway purine metabolism; 7-cyano-7-deazaguanine biosynthesis. Its function is as follows. Catalyzes the ATP-dependent conversion of 7-carboxy-7-deazaguanine (CDG) to 7-cyano-7-deazaguanine (preQ(0)). The chain is 7-cyano-7-deazaguanine synthase from Cellvibrio japonicus (strain Ueda107) (Pseudomonas fluorescens subsp. cellulosa).